Consider the following 123-residue polypeptide: Small ribosomal subunit protein uS12 (123 aa).

D89 is subject to 3-methylthioaspartic acid.

Belongs to the universal ribosomal protein uS12 family. Part of the 30S ribosomal subunit. Contacts proteins S8 and S17. May interact with IF1 in the 30S initiation complex.

Functionally, with S4 and S5 plays an important role in translational accuracy. Interacts with and stabilizes bases of the 16S rRNA that are involved in tRNA selection in the A site and with the mRNA backbone. Located at the interface of the 30S and 50S subunits, it traverses the body of the 30S subunit contacting proteins on the other side and probably holding the rRNA structure together. The combined cluster of proteins S8, S12 and S17 appears to hold together the shoulder and platform of the 30S subunit. The sequence is that of Small ribosomal subunit protein uS12 from Methylobacterium sp. (strain 4-46).